Here is a 249-residue protein sequence, read N- to C-terminus: uncharacterized protein (249 aa).

Its subcellular location is the cytoplasm. The protein resides in the nucleus. This is an uncharacterized protein from Schizosaccharomyces pombe (strain 972 / ATCC 24843) (Fission yeast).